The primary structure comprises 451 residues: Phosphoglucosamine mutase (451 aa).

The Phosphoserine intermediate role is filled by S101. Positions 101, 240, 242, and 244 each coordinate Mg(2+). The residue at position 101 (S101) is a Phosphoserine.

Belongs to the phosphohexose mutase family. It depends on Mg(2+) as a cofactor. In terms of processing, activated by phosphorylation.

It carries out the reaction alpha-D-glucosamine 1-phosphate = D-glucosamine 6-phosphate. Functionally, catalyzes the conversion of glucosamine-6-phosphate to glucosamine-1-phosphate. The polypeptide is Phosphoglucosamine mutase (Streptococcus pyogenes serotype M1).